The sequence spans 205 residues: Ribonuclease HII (205 aa).

The region spanning 14-205 (SLISGIDEAG…SFRLKQLGEK (192 aa)) is the RNase H type-2 domain. A divalent metal cation contacts are provided by D20, E21, and D117.

It belongs to the RNase HII family. It depends on Mn(2+) as a cofactor. The cofactor is Mg(2+).

It localises to the cytoplasm. It catalyses the reaction Endonucleolytic cleavage to 5'-phosphomonoester.. In terms of biological role, endonuclease that specifically degrades the RNA of RNA-DNA hybrids. The chain is Ribonuclease HII from Chlorobium phaeobacteroides (strain DSM 266 / SMG 266 / 2430).